The chain runs to 94 residues: Defensin-7 (94 aa).

A signal peptide spans 1–19; the sequence is MRTLTLLSAFLLVALQAWA. 2 disulfides stabilise this stretch: Cys-65–Cys-93 and Cys-72–Cys-92.

It belongs to the alpha-defensin family.

Its subcellular location is the secreted. Functionally, has antimicrobial activity. In Pan troglodytes (Chimpanzee), this protein is Defensin-7 (DEFA7).